The following is a 103-amino-acid chain: Colicin-V (103 aa).

A propeptide spanning residues 1–15 is cleaved from the precursor; the sequence is MRTLTLNELDSVSGG. Residues C91 and C102 are joined by a disulfide bond.

Its subcellular location is the secreted. In terms of biological role, colicin V kills sensitive cells by disrupting the membrane potential. Its function is as follows. Colicins are polypeptide toxins produced by, and active against E.coli and closely related bacteria. This is Colicin-V (cvaC) from Escherichia coli.